Reading from the N-terminus, the 230-residue chain is Cutinase (230 aa).

The signal sequence occupies residues 1 to 16; sequence MKFFALTTFLAATASA. An intrachain disulfide couples Cys47 to Cys125. Catalysis depends on Ser136, which acts as the Nucleophile. A disulfide bridge connects residues Cys187 and Cys194. The active site involves Asp191. The active-site Proton donor/acceptor is the His204.

This sequence belongs to the cutinase family. The 2 disulfide bonds play a critical role in holding the catalytic residues in juxta-position; reduction of the disulfide bridges results in the complete inactivation of the enzyme.

Its subcellular location is the secreted. It carries out the reaction cutin + H2O = cutin monomers.. Catalyzes the hydrolysis of complex carboxylic polyesters found in the cell wall of plants. Degrades cutin, a macromolecule that forms the structure of the plant cuticle. Allows pathogenic fungi to penetrate through the cuticular barrier into the host plant during the initial stage of fungal infection. This is Cutinase (CUTA) from Fusarium solani subsp. cucurbitae (Neocosmosporum cucurbitae).